An 812-amino-acid chain; its full sequence is Valine--tRNA ligase (812 aa).

Positions 46-56 (PTVSGQLHIGH) match the 'HIGH' region motif. The short motif at 536–540 (KMSKS) is the 'KMSKS' region element. Lys539 is an ATP binding site.

Belongs to the class-I aminoacyl-tRNA synthetase family. ValS type 2 subfamily. In terms of assembly, monomer.

The protein localises to the cytoplasm. It catalyses the reaction tRNA(Val) + L-valine + ATP = L-valyl-tRNA(Val) + AMP + diphosphate. Catalyzes the attachment of valine to tRNA(Val). As ValRS can inadvertently accommodate and process structurally similar amino acids such as threonine, to avoid such errors, it has a 'posttransfer' editing activity that hydrolyzes mischarged Thr-tRNA(Val) in a tRNA-dependent manner. The protein is Valine--tRNA ligase of Rickettsia bellii (strain RML369-C).